A 454-amino-acid chain; its full sequence is UDP-N-acetylmuramoylalanine--D-glutamate ligase (454 aa).

117–123 contacts ATP; it reads GTNGKTT.

The protein belongs to the MurCDEF family.

It is found in the cytoplasm. It carries out the reaction UDP-N-acetyl-alpha-D-muramoyl-L-alanine + D-glutamate + ATP = UDP-N-acetyl-alpha-D-muramoyl-L-alanyl-D-glutamate + ADP + phosphate + H(+). Its pathway is cell wall biogenesis; peptidoglycan biosynthesis. Functionally, cell wall formation. Catalyzes the addition of glutamate to the nucleotide precursor UDP-N-acetylmuramoyl-L-alanine (UMA). In Alkaliphilus oremlandii (strain OhILAs) (Clostridium oremlandii (strain OhILAs)), this protein is UDP-N-acetylmuramoylalanine--D-glutamate ligase.